The following is a 64-amino-acid chain: Basic secretory protease (64 aa).

Requires a divalent metal cation as cofactor. Glycosylated.

With respect to regulation, inhibited by EDTA. Functionally, metalloprotease, digests gelatin and azocasein (in vitro). This is Basic secretory protease from Boswellia serrata (Indian frankincense).